We begin with the raw amino-acid sequence, 2664 residues long: MAENSGRGYQTPVHRDVFFSKSAPQSGNTADDIPNAASQPDTTSTMAMPSAKTLLLFGPGAMSLDQTYFSRILSFVKDDAASQWAVRAIEDIESGWDALSESIPKLQQTPGADHARRLAEWLRTGVITPRTTVANLPNAILGPLVIIAQLVEYLQYVESSQSANGDGKLFQLPSTAQTETVGCCLGVFSALVVSSSSSWAKFHHNAAAVLRKVFVLGALSDAQDISDVTGSSVSLIAFWRGGQSLSDLKKVLEICPGAYISVLYDDNRATVTTPSRIASDLKGHLSRAGFTASETEFHGRFHAGELYNNDLEALFSFCRKDPLFQLPDASSLILRTRVNSEKILADNDSLLEVASRAFLVEQFNWVKTFRSAVSSSLQDRTSKVIEFGPERCVPPTLLRRLNSQVTHYEFQSTGQRHSNPDMPSGCIDNDIAVIGMSCQVAGAQDLEQYWNILLEGRSQHKNLVPNERFAMETVFRPGQDGEDRKWYGNFIDDYDAFDYKFFRKSPREVLHMDPQQRLILQTAYQAVAQSGYYHRPGADRRIGCYIGCVANDYENNISHTSPTAFSATGALRSYIAGKVSHYFGWTGPGMMLDTACSASTVAIDLACRAILSGDCSAALAGGTNFYSTPMFFQNLAAGSFLSPTGQCKPFDAKADGYCRGEAIGAVFLKKLSNAIADGDQILGVISATAINQNQNDTPIFVPNPSSLTNVFQNVVGKAGLEVNDISVVEAHGTGTPVGDPAEYDSIRQVFGGSVRAGLKPLQLGSVKGLIGHTEGASGVVALIKMLLMMQESRIPPQASFTSMSASIKASPADNMEITKAALPWEDESKVALINNYGAAGSNASMVIKQAPKYPSGSEAVGHGSADLTSPTSTFRCPFYISGLDDKAIRAYATRLRQFIKNKVISRDVLGIENLSFNVNRQSNWSLSRGFVFGAESITELEEKLASFETFAVPSVRPVILCFGGQVSKSVGLDRGVFDKATVLRKYLDRCDSVCKSIGAGSIYPGIFQSEPILDPAVLQPLLLSMQYSCALSWIDCGVEPAALVGHSFGELTALCVSGILSLEDALKLVHGRSKIIKESWGPEKGSMIAVEADRNDVEKLLVASNARLGETERAGHATIACFNGPKSFTIAGSAAAIDAVQQTVSTLDIPIKHKRLDVTNAFHSTLVEHLRPQLEALGRSLSFGNAHIPLERATEQRETGPISPAYVAEHMRNPVYFDHAVQRLASQYPEAIWLEAGSNSTITTMTGRALGMPKGSTFQPVSVTGTTQGTRQLADVTMSLWNAGLPCSFWPHSRAQTYGYAPIMLPPYQFEKYRHWLEFKPPPKPVVIERLVYENGGVDQEAPAPGLYTFMGYGDKTETDCRFRINTTTKSYVDIVSGYTLGKTVQACPPIFGIDTAIQAITSVRLEVIAANELHPHIYNVLNHLPLVMDPTRAVFLEFERSGHAPEGWKFKLTSEADDSSKTVHLSGQLEFHRADDARSNFEFSRLERLVTHERCLRALESADDADEVIQGQSIYKVYSDLVSYAPKFRGLQRLVGRPSESAGRAVKRRSRDSWLDFALGETFSQVGSIWVNCLAPGRNTADDTVYIADGIEQWMRSPSLLRKISEGSYADHQSEWQILATHKRTEGDTFITDIFVFDSASRLLDEALLGVKFSARSMSELFTNVVIAAPPVPFPATIAPISSAPTENQYSSMTTSPPARAQVQKRNTKTELWAKLLPVLADISGLEPEEINETDALADIGIDSLMGMEMAREVETTFNCTLEQSELMSIFDVPGILAFLQSTLGLEGEDDASQSSDAASSSRNTPPSSNDGILATPSPKLEEEDISRSYIDLGNEVGLPAFAVIEAFRAANEQTDAYLKKWKCAGYLDGASQKQTRLCLVLTSDAFKQLGCDLVAAKPGEVLQPVPFVPRHHRFHEYLYKMLEETRIIDVDEGIITRTALPLPTQSSQAILDDLMSHHPDDGPSHQLTYNIGSRMADVLSGKADGPQLIFGDAKNRELVAAFYGELPFNKLYFQLMADFLSRIAESLRLCAQNRGPLKILEMGAGTGGTTKVLVPALAKLGIPVEYTFTDLSPSLVAQAKKKFKQYPFMKFAVHDIEQPPSDPLLIGSQNIVIASNAVHATHSLQVSTQNIRKFLRPDGFLMLLEMNSTLHWVDVVWGTLEGWWLFEDGRTHAVVDERQWEKELLDAGYKHVEWTDGKLPEVRVQRVRIALADDVEQNVGRLPPVAKQQVDDHDLSEEELNEKKQVADDYVKETIRGFTIPAYSGDLTDSSEYGKAVLVTGTTGSLGSHIIAHLVSLPSVDRVYCLNRPAIGGARAKDATPRDPLHRQLQSLESKSIALDASQLAKLKVIETDSSKAQLGLDTEEYKHLLCHVTHIIHNAFPVNGLRSLKQNEAQFTIMRNLVDLAAEISARRKATDFKFAFQFISSLSAVGKYPSVHAGEIQVPEEHLNIDSALPNGYGGAKVICERILHETLGQYPERFRAMTVRLGQLSGSMETGYWNHMEVLGFLFKSAQTLRSFPAVEGILTWLPLEQASATLADLLLRDAPDCHPVYHVDNPVRKPWAEIVPVLAQALGIPEKGIVPLDDWLRRVKAFPGEDPWDNPAGKAIDFFEHKFQHMSCGGVTMATNNAVEHSPTLRGVQPVADAVVMKYFQVWKDTGFLR.

Residues Lys-21–Thr-45 are disordered. Over residues Ala-36–Thr-45 the composition is skewed to polar residues. Residues Ala-112–Leu-281 are N-terminal acylcarrier protein transacylase domain (SAT). The active-site Nucleophile; for transacylase activity is Cys-184. The active-site Proton donor/acceptor; for transacylase activity is the His-302. Positions Asp-428–Gln-849 constitute a Ketosynthase family 3 (KS3) domain. Catalysis depends on for beta-ketoacyl synthase activity residues Cys-596, His-731, and His-772. The malonyl-CoA:ACP transacylase (MAT) domain stretch occupies residues Cys-961–Val-1276. The N-terminal hotdog fold stretch occupies residues Pro-1345–Asp-1477. The region spanning Pro-1345–Phe-1663 is the PKS/mFAS DH domain. Positions Val-1376–Lys-1548 are product template (PT) domain. The interval Asp-1507–Phe-1663 is C-terminal hotdog fold. The 75-residue stretch at Thr-1711–Leu-1785 folds into the Carrier domain. O-(pantetheine 4'-phosphoryl)serine is present on Ser-1745. Residues Gly-1789–Pro-1820 form a disordered region. Low complexity predominate over residues Ser-1794 to Ser-1803. Residues Phe-2015 to Thr-2197 are methyltransferase domain. The interval Val-2281–Gly-2526 is NADPH-binding (R) domain.

Pantetheine 4'-phosphate serves as cofactor.

It participates in secondary metabolite biosynthesis. Functionally, non-reducing polyketide synthase; part of the gene cluster that mediates the biosynthesis of sorbicillinoids, a diverse group of yellow secondary metabolites that restrict growth of competing pathogenic fungi but not of bacteria. Sorbicillinoids biosynthesis requires the action of two PKSs. SorA iteratively combines three acetyl units and the growing chain is modified by the ketoacyl reductase subunit, and optional by the enoyl reductase subunit in the second cycle. The polyketide is then handed over to the PKS SorB, which adds three more acetyl units, and two methyl groups. SorB releases an aldehyde, which undergoes spontaneous cyclization resulting in the formation of sorbicillin or 2',3'-dihydrosorbicillin. The monooxygenase sorC oxidizes sorbicillin and 2',3'-dihydrosorbicillin to 2',3'-dihydrosorbicillinol and sorbicillinol, respectively. The oxidoreductase sorD further converts sorbicillinol into oxosorbicillinol. Sorbicillinol is the building block for the other sorbicillinoids such as disorbicillinol, bisvertinolon, and dihydrobisvertinolone. In Penicillium rubens (strain ATCC 28089 / DSM 1075 / NRRL 1951 / Wisconsin 54-1255) (Penicillium chrysogenum), this protein is Non-reducing polyketide synthase sorB.